Consider the following 972-residue polypeptide: Fibroblast growth factor receptor (972 aa).

The N-terminal stretch at 1-43 (MSLPRCPRTRTVMFSRTLTRCYPQRTLWIAILCVICSWTLSTA) is a signal peptide. Over 44 to 547 (GATTIRDKEV…NNMQPTSKTQ (504 aa)) the chain is Extracellular. A Fibronectin type-III domain is found at 57–152 (APQDLTAIPV…YIEASGTPPI (96 aa)). Asn-109, Asn-121, Asn-191, Asn-203, Asn-239, Asn-272, Asn-315, Asn-390, Asn-398, Asn-419, Asn-422, and Asn-460 each carry an N-linked (GlcNAc...) asparagine glycan. Residues 150-242 (PPIPPTLRRN…GQPIHVNFTL (93 aa)) enclose the Ig-like C2-type 1 domain. Residues Cys-176 and Cys-226 are joined by a disulfide bond. Ig-like C2-type domains are found at residues 282–374 (PRFT…YDVK) and 383–517 (PIMS…AYLD). Cys-306 and Cys-358 are disulfide-bonded. An intrachain disulfide couples Cys-403 to Cys-501. The chain crosses the membrane as a helical span at residues 548–568 (LIIFSVVGFVVVLILVTCIAI). Residues 569 to 972 (LCKQTQVRHR…QTRDCCPYAN (404 aa)) are Cytoplasmic-facing. The 287-residue stretch at 639–925 (LTVGKTIGEG…ISVSSNQDYL (287 aa)) folds into the Protein kinase domain. Residues 645–653 (IGEGAFGKV) and Lys-673 each bind ATP. The active-site Proton acceptor is Asp-781. Tyr-812 carries the phosphotyrosine; by autocatalysis modification.

It belongs to the protein kinase superfamily. Tyr protein kinase family. Fibroblast growth factor receptor subfamily.

It localises to the membrane. It carries out the reaction L-tyrosyl-[protein] + ATP = O-phospho-L-tyrosyl-[protein] + ADP + H(+). Receptor for basic fibroblast growth factor. The polypeptide is Fibroblast growth factor receptor (FGFR) (Strongylocentrotus purpuratus (Purple sea urchin)).